We begin with the raw amino-acid sequence, 85 residues long: U4-theraphotoxin-Hhn1z (85 aa).

Residues 1–22 (MKMTLIAILTCAAVLVLHTTAA) form the signal peptide. The propeptide occupies 23 to 48 (EELEAESQLMEVGMPDTELEAVDEER). Disulfide bonds link Cys52–Cys66, Cys56–Cys77, and Cys71–Cys82.

This sequence belongs to the neurotoxin 12 (Hwtx-2) family. 02 (Hwtx-2) subfamily. As to expression, expressed by the venom gland.

It localises to the secreted. Its function is as follows. Postsynaptic neurotoxin. This Cyriopagopus hainanus (Chinese bird spider) protein is U4-theraphotoxin-Hhn1z.